The chain runs to 143 residues: Histone H2AX (143 aa).

The disordered stretch occupies residues 1–22 (MSGRGKTGGKARAKAKSRSSRA). Ser2 carries the post-translational modification N-acetylserine. A Phosphoserine modification is found at Ser2. N6-acetyllysine occurs at positions 6 and 10. The segment covering 7 to 19 (TGGKARAKAKSRS) has biased composition (basic residues). Lys10 is subject to N6-lactoyllysine; alternate. Glycyl lysine isopeptide (Lys-Gly) (interchain with G-Cter in ubiquitin) cross-links involve residues Lys14 and Lys16. Lys37 is subject to N6-acetyllysine. Lys120 is covalently cross-linked (Glycyl lysine isopeptide (Lys-Gly) (interchain with G-Cter in ubiquitin)). Residues 121 to 143 (TSATVGPKAPSGGKKATQASQEY) are disordered. Ser122 is modified (phosphoserine). Residues Lys128 and Lys135 each participate in a glycyl lysine isopeptide (Lys-Gly) (interchain with G-Cter in SUMO2) cross-link. Residue Ser140 is modified to Phosphoserine; by ATM, ATR and PRKDC. The short motif at 140–141 (SQ) is the [ST]-Q motif element. Tyr143 bears the Phosphotyrosine; by WSTF mark.

Belongs to the histone H2A family. The nucleosome is a histone octamer containing two molecules each of H2A, H2B, H3 and H4 assembled in one H3-H4 heterotetramer and two H2A-H2B heterodimers. The octamer wraps approximately 147 bp of DNA. Interacts with numerous proteins required for DNA damage signaling and repair when phosphorylated on Ser-140. These include MDC1, TP53BP1, BRCA1 and the MRN complex, composed of MRE11, RAD50, and NBN. Interaction with the MRN complex is mediated at least in part by NBN. Also interacts with DHX9/NDHII when phosphorylated on Ser-140 and MCPH1 when phosphorylated at Ser-140 or Tyr-143. Interacts with ARRB2; the interaction is detected in the nucleus upon OR1D2 stimulation. Interacts with WRAP53/TCAB1. Interacts with HDGFL2. Interacts with DNA damage up-regulated protein DDUP. Forms a complex with DDUP and RAD18 following DDUP phosphorylation. As to quaternary structure, (Microbial infection) Interacts with Epstein-Barr virus protein EBNA6. In terms of processing, phosphorylated by VRK1. Phosphorylated on Ser-140 (to form gamma-H2AX or H2AX139ph) in response to DNA double strand breaks (DSBs) generated by exogenous genotoxic agents and by stalled replication forks, and may also occur during meiotic recombination events and immunoglobulin class switching in lymphocytes. Phosphorylation can extend up to several thousand nucleosomes from the actual site of the DSB and may mark the surrounding chromatin for recruitment of proteins required for DNA damage signaling and repair. Widespread phosphorylation may also serve to amplify the damage signal or aid repair of persistent lesions. Phosphorylation of Ser-140 (H2AX139ph) in response to ionizing radiation is mediated by both ATM and PRKDC while defects in DNA replication induce Ser-140 phosphorylation (H2AX139ph) subsequent to activation of ATR and PRKDC. Dephosphorylation of Ser-140 by PP2A is required for DNA DSB repair. In meiosis, Ser-140 phosphorylation (H2AX139ph) may occur at synaptonemal complexes during leptotene as an ATM-dependent response to the formation of programmed DSBs by SPO11. Ser-140 phosphorylation (H2AX139ph) may subsequently occurs at unsynapsed regions of both autosomes and the XY bivalent during zygotene, downstream of ATR and BRCA1 activation. Ser-140 phosphorylation (H2AX139ph) may also be required for transcriptional repression of unsynapsed chromatin and meiotic sex chromosome inactivation (MSCI), whereby the X and Y chromosomes condense in pachytene to form the heterochromatic XY-body. During immunoglobulin class switch recombination in lymphocytes, Ser-140 phosphorylation (H2AX139ph) may occur at sites of DNA-recombination subsequent to activation of the activation-induced cytidine deaminase AICDA. Phosphorylation at Tyr-143 (H2AXY142ph) by BAZ1B/WSTF determines the relative recruitment of either DNA repair or pro-apoptotic factors. Phosphorylation at Tyr-143 (H2AXY142ph) favors the recruitment of APBB1/FE65 and pro-apoptosis factors such as MAPK8/JNK1, triggering apoptosis. In contrast, dephosphorylation of Tyr-143 by EYA proteins (EYA1, EYA2, EYA3 or EYA4) favors the recruitment of MDC1-containing DNA repair complexes to the tail of phosphorylated Ser-140 (H2AX139ph). Post-translationally, monoubiquitination of Lys-120 (H2AXK119ub) by RING1 and RNF2/RING2 complex gives a specific tag for epigenetic transcriptional repression. Following DNA double-strand breaks (DSBs), it is ubiquitinated through 'Lys-63' linkage of ubiquitin moieties by the E2 ligase UBE2N and the E3 ligases RNF8 and RNF168, leading to the recruitment of repair proteins to sites of DNA damage. Ubiquitination at Lys-14 and Lys-16 (H2AK13Ub and H2AK15Ub, respectively) in response to DNA damage is initiated by RNF168 that mediates monoubiquitination at these 2 sites, and 'Lys-63'-linked ubiquitin are then conjugated to monoubiquitin; RNF8 is able to extend 'Lys-63'-linked ubiquitin chains in vitro. H2AK119Ub and ionizing radiation-induced 'Lys-63'-linked ubiquitination (H2AK13Ub and H2AK15Ub) are distinct events. Acetylation at Lys-6 (H2AXK5ac) by KAT5 component of the NuA4 histone acetyltransferase complex promotes NBN/NBS1 assembly at the sites of DNA damage. Acetylation at Lys-37 increases in S and G2 phases. This modification has been proposed to play a role in DNA double-strand break repair.

It localises to the nucleus. It is found in the chromosome. Functionally, variant histone H2A which replaces conventional H2A in a subset of nucleosomes. Nucleosomes wrap and compact DNA into chromatin, limiting DNA accessibility to the cellular machineries which require DNA as a template. Histones thereby play a central role in transcription regulation, DNA repair, DNA replication and chromosomal stability. DNA accessibility is regulated via a complex set of post-translational modifications of histones, also called histone code, and nucleosome remodeling. Required for checkpoint-mediated arrest of cell cycle progression in response to low doses of ionizing radiation and for efficient repair of DNA double strand breaks (DSBs) specifically when modified by C-terminal phosphorylation. In Homo sapiens (Human), this protein is Histone H2AX.